A 77-amino-acid chain; its full sequence is Small ribosomal subunit protein uS17c (77 aa).

This sequence belongs to the universal ribosomal protein uS17 family. In terms of assembly, part of the 30S ribosomal subunit.

The protein localises to the plastid. It localises to the chloroplast. Functionally, one of the primary rRNA binding proteins, it binds specifically to the 5'-end of 16S ribosomal RNA. In Cyanidium caldarium (Red alga), this protein is Small ribosomal subunit protein uS17c (rps17).